Consider the following 93-residue polypeptide: U12-lycotoxin-Ls1c (93 aa).

Residues 1 to 18 (MKFAVILLFSLVVLAVAS) form the signal peptide. The propeptide occupies 19–38 (ESVEEVRREIDIEDLPEQQR).

Belongs to the neurotoxin 31 family. In terms of processing, contains 5 disulfide bonds. As to expression, expressed by the venom gland.

The protein resides in the secreted. This chain is U12-lycotoxin-Ls1c, found in Lycosa singoriensis (Wolf spider).